The sequence spans 277 residues: MEMO1 family protein TM_0087 (277 aa).

The protein belongs to the MEMO1 family.

The polypeptide is MEMO1 family protein TM_0087 (Thermotoga maritima (strain ATCC 43589 / DSM 3109 / JCM 10099 / NBRC 100826 / MSB8)).